Reading from the N-terminus, the 375-residue chain is Guanine nucleotide-binding protein subunit beta (375 aa).

WD repeat units follow at residues 63–93, 105–135, 154–185, 202–233, 246–276, 293–323, and 339–369; these read GHTG…IVWN, LPCA…SIYN, GHKG…VLWD, GHTA…RLWD, GHEG…RLFD, GDIP…YVWD, and SHEG…KIWA.

It belongs to the WD repeat G protein beta family. In terms of assembly, g proteins are composed of 3 units, alpha, beta and gamma.

In terms of biological role, guanine nucleotide-binding proteins (G proteins) are involved as a modulator or transducer in various transmembrane signaling systems. The beta and gamma chains are required for the GTPase activity, for replacement of GDP by GTP, and for G protein-effector interaction. The sequence is that of Guanine nucleotide-binding protein subunit beta from Nicotiana tabacum (Common tobacco).